Here is a 97-residue protein sequence, read N- to C-terminus: Carboxysome shell protein CsoS1B (97 aa).

In terms of domain architecture, BMC spans 8 to 93 (ALGMIETRGL…PHKEVEPVLT (86 aa)).

Belongs to the bacterial microcompartments protein family. CsoS1 subfamily. In terms of assembly, homohexamer with a small central pore.

The protein localises to the carboxysome. Functionally, one of shell proteins of the carboxysome, a polyhedral inclusion where RuBisCO (ribulose bisphosphate carboxylase, ccbL-ccbS) is sequestered. Assembles into hexamers which make sheets that form the facets of the polyhedral carboxysome. The shell probably limits the diffusion of CO(2) into and out of the carboxysome. This is Carboxysome shell protein CsoS1B from Hydrogenovibrio crunogenus (strain DSM 25203 / XCL-2) (Thiomicrospira crunogena).